The chain runs to 438 residues: Ribosomal protein uS12 methylthiotransferase RimO (438 aa).

The 116-residue stretch at 1–116 (MNVGFISLGC…IWKEIENLLD (116 aa)) folds into the MTTase N-terminal domain. Cys10, Cys46, Cys79, Cys147, Cys151, and Cys154 together coordinate [4Fe-4S] cluster. Residues 133–363 (TTGSNMAYLK…MALQEKISRE (231 aa)) form the Radical SAM core domain. Positions 366 to 435 (EQKVGNVYKV…DYDLFGELYT (70 aa)) constitute a TRAM domain.

Belongs to the methylthiotransferase family. RimO subfamily. [4Fe-4S] cluster is required as a cofactor.

It is found in the cytoplasm. It carries out the reaction L-aspartate(89)-[ribosomal protein uS12]-hydrogen + (sulfur carrier)-SH + AH2 + 2 S-adenosyl-L-methionine = 3-methylsulfanyl-L-aspartate(89)-[ribosomal protein uS12]-hydrogen + (sulfur carrier)-H + 5'-deoxyadenosine + L-methionine + A + S-adenosyl-L-homocysteine + 2 H(+). In terms of biological role, catalyzes the methylthiolation of an aspartic acid residue of ribosomal protein uS12. The sequence is that of Ribosomal protein uS12 methylthiotransferase RimO from Alkaliphilus oremlandii (strain OhILAs) (Clostridium oremlandii (strain OhILAs)).